A 214-amino-acid chain; its full sequence is Thiamine-phosphate synthase (214 aa).

4-amino-2-methyl-5-(diphosphooxymethyl)pyrimidine-binding positions include 37 to 41 (QYREK) and N73. Positions 74 and 93 each coordinate Mg(2+). S112 contacts 4-amino-2-methyl-5-(diphosphooxymethyl)pyrimidine. 139-141 (TIS) contacts 2-[(2R,5Z)-2-carboxy-4-methylthiazol-5(2H)-ylidene]ethyl phosphate. A 4-amino-2-methyl-5-(diphosphooxymethyl)pyrimidine-binding site is contributed by K142. Residues G171 and 191–192 (IS) each bind 2-[(2R,5Z)-2-carboxy-4-methylthiazol-5(2H)-ylidene]ethyl phosphate.

It belongs to the thiamine-phosphate synthase family. It depends on Mg(2+) as a cofactor.

The enzyme catalyses 2-[(2R,5Z)-2-carboxy-4-methylthiazol-5(2H)-ylidene]ethyl phosphate + 4-amino-2-methyl-5-(diphosphooxymethyl)pyrimidine + 2 H(+) = thiamine phosphate + CO2 + diphosphate. It catalyses the reaction 2-(2-carboxy-4-methylthiazol-5-yl)ethyl phosphate + 4-amino-2-methyl-5-(diphosphooxymethyl)pyrimidine + 2 H(+) = thiamine phosphate + CO2 + diphosphate. It carries out the reaction 4-methyl-5-(2-phosphooxyethyl)-thiazole + 4-amino-2-methyl-5-(diphosphooxymethyl)pyrimidine + H(+) = thiamine phosphate + diphosphate. Its pathway is cofactor biosynthesis; thiamine diphosphate biosynthesis; thiamine phosphate from 4-amino-2-methyl-5-diphosphomethylpyrimidine and 4-methyl-5-(2-phosphoethyl)-thiazole: step 1/1. In terms of biological role, condenses 4-methyl-5-(beta-hydroxyethyl)thiazole monophosphate (THZ-P) and 2-methyl-4-amino-5-hydroxymethyl pyrimidine pyrophosphate (HMP-PP) to form thiamine monophosphate (TMP). The protein is Thiamine-phosphate synthase of Listeria innocua serovar 6a (strain ATCC BAA-680 / CLIP 11262).